Reading from the N-terminus, the 351-residue chain is Dihydroorotate dehydrogenase (quinone) (351 aa).

FMN-binding positions include 61–65 (AGLDK) and Thr85. Position 65 (Lys65) interacts with substrate. Residue 110–114 (NRMGF) participates in substrate binding. Residues Asn139 and Asn172 each contribute to the FMN site. Asn172 provides a ligand contact to substrate. Ser175 (nucleophile) is an active-site residue. Asn177 is a substrate binding site. FMN is bound by residues Lys217 and Thr245. 246-247 (NT) contacts substrate. Residues Gly268, Gly297, and 318 to 319 (YS) each bind FMN.

This sequence belongs to the dihydroorotate dehydrogenase family. Type 2 subfamily. Monomer. The cofactor is FMN.

It is found in the cell membrane. The catalysed reaction is (S)-dihydroorotate + a quinone = orotate + a quinol. It functions in the pathway pyrimidine metabolism; UMP biosynthesis via de novo pathway; orotate from (S)-dihydroorotate (quinone route): step 1/1. Its function is as follows. Catalyzes the conversion of dihydroorotate to orotate with quinone as electron acceptor. This is Dihydroorotate dehydrogenase (quinone) from Xanthomonas oryzae pv. oryzae (strain MAFF 311018).